We begin with the raw amino-acid sequence, 28 residues long: Caerulein precursor fragment B1 (28 aa).

Belongs to the gastrin/cholecystokinin family. In terms of tissue distribution, expressed by the skin glands.

The protein localises to the secreted. Its function is as follows. Peptide CPF-B1: Has antimicrobial activity against Gram-negative bacteria E.coli ATCC 25922 (MIC=5 uM) and multidrug-resistant A.baumannii (MIC=4-8 uM), against Gram-positive bacteria S.aureus ATCC 25923 (MIC=5 uM) and methicillin-resistant S.aureus and against fungus C.albicans ATCC 90028 (MIC=25 uM). Has some hemolytic activity against human erythrocytes at high concentrations. This Xenopus borealis (Kenyan clawed frog) protein is Caerulein precursor fragment B1.